We begin with the raw amino-acid sequence, 180 residues long: NADH-quinone oxidoreductase subunit I (180 aa).

2 4Fe-4S ferredoxin-type domains span residues 50–80 and 90–119; these read LTRD…LQKA and EFFR…LTPD. Positions 60, 63, 66, 70, 99, 102, 105, and 109 each coordinate [4Fe-4S] cluster.

This sequence belongs to the complex I 23 kDa subunit family. As to quaternary structure, NDH-1 is composed of 13 different subunits. Subunits NuoA, H, J, K, L, M, N constitute the membrane sector of the complex. The cofactor is [4Fe-4S] cluster.

Its subcellular location is the cell inner membrane. The enzyme catalyses a quinone + NADH + 5 H(+)(in) = a quinol + NAD(+) + 4 H(+)(out). Functionally, NDH-1 shuttles electrons from NADH, via FMN and iron-sulfur (Fe-S) centers, to quinones in the respiratory chain. The immediate electron acceptor for the enzyme in this species is believed to be ubiquinone. Couples the redox reaction to proton translocation (for every two electrons transferred, four hydrogen ions are translocated across the cytoplasmic membrane), and thus conserves the redox energy in a proton gradient. This is NADH-quinone oxidoreductase subunit I from Pectobacterium atrosepticum (strain SCRI 1043 / ATCC BAA-672) (Erwinia carotovora subsp. atroseptica).